Consider the following 326-residue polypeptide: Tagatose 1,6-diphosphate aldolase (326 aa).

It belongs to the aldolase LacD family.

It catalyses the reaction D-tagatofuranose 1,6-bisphosphate = D-glyceraldehyde 3-phosphate + dihydroxyacetone phosphate. It functions in the pathway carbohydrate metabolism; D-tagatose 6-phosphate degradation; D-glyceraldehyde 3-phosphate and glycerone phosphate from D-tagatose 6-phosphate: step 2/2. In Streptococcus pneumoniae serotype 4 (strain ATCC BAA-334 / TIGR4), this protein is Tagatose 1,6-diphosphate aldolase.